Here is a 358-residue protein sequence, read N- to C-terminus: Phospho-N-acetylmuramoyl-pentapeptide-transferase (358 aa).

Helical transmembrane passes span 13-47 (LFIL…SIFI), 81-101 (MGGI…TINL), 106-126 (LILL…DDYL), 148-168 (ISII…LITI), 171-191 (SWAI…LVGI), 201-221 (LDGL…TEIL), 228-248 (LFVF…FLKY), 255-275 (IFMG…IALL), 278-298 (SIFT…SVII), and 336-356 (IVEN…VLKI).

The protein belongs to the glycosyltransferase 4 family. MraY subfamily. The cofactor is Mg(2+).

It localises to the cell inner membrane. It catalyses the reaction UDP-N-acetyl-alpha-D-muramoyl-L-alanyl-gamma-D-glutamyl-meso-2,6-diaminopimeloyl-D-alanyl-D-alanine + di-trans,octa-cis-undecaprenyl phosphate = di-trans,octa-cis-undecaprenyl diphospho-N-acetyl-alpha-D-muramoyl-L-alanyl-D-glutamyl-meso-2,6-diaminopimeloyl-D-alanyl-D-alanine + UMP. Its pathway is cell wall biogenesis; peptidoglycan biosynthesis. Catalyzes the initial step of the lipid cycle reactions in the biosynthesis of the cell wall peptidoglycan: transfers peptidoglycan precursor phospho-MurNAc-pentapeptide from UDP-MurNAc-pentapeptide onto the lipid carrier undecaprenyl phosphate, yielding undecaprenyl-pyrophosphoryl-MurNAc-pentapeptide, known as lipid I. The sequence is that of Phospho-N-acetylmuramoyl-pentapeptide-transferase from Prochlorococcus marinus (strain MIT 9301).